The following is a 406-amino-acid chain: Tryptophan synthase beta chain (406 aa).

Lys-99 is subject to N6-(pyridoxal phosphate)lysine.

The protein belongs to the TrpB family. Tetramer of two alpha and two beta chains. It depends on pyridoxal 5'-phosphate as a cofactor.

The enzyme catalyses (1S,2R)-1-C-(indol-3-yl)glycerol 3-phosphate + L-serine = D-glyceraldehyde 3-phosphate + L-tryptophan + H2O. It functions in the pathway amino-acid biosynthesis; L-tryptophan biosynthesis; L-tryptophan from chorismate: step 5/5. The beta subunit is responsible for the synthesis of L-tryptophan from indole and L-serine. The polypeptide is Tryptophan synthase beta chain (Brucella anthropi (strain ATCC 49188 / DSM 6882 / CCUG 24695 / JCM 21032 / LMG 3331 / NBRC 15819 / NCTC 12168 / Alc 37) (Ochrobactrum anthropi)).